A 234-amino-acid chain; its full sequence is Leucyl/phenylalanyl-tRNA--protein transferase (234 aa).

The protein belongs to the L/F-transferase family.

The protein resides in the cytoplasm. The catalysed reaction is N-terminal L-lysyl-[protein] + L-leucyl-tRNA(Leu) = N-terminal L-leucyl-L-lysyl-[protein] + tRNA(Leu) + H(+). It catalyses the reaction N-terminal L-arginyl-[protein] + L-leucyl-tRNA(Leu) = N-terminal L-leucyl-L-arginyl-[protein] + tRNA(Leu) + H(+). The enzyme catalyses L-phenylalanyl-tRNA(Phe) + an N-terminal L-alpha-aminoacyl-[protein] = an N-terminal L-phenylalanyl-L-alpha-aminoacyl-[protein] + tRNA(Phe). Functionally, functions in the N-end rule pathway of protein degradation where it conjugates Leu, Phe and, less efficiently, Met from aminoacyl-tRNAs to the N-termini of proteins containing an N-terminal arginine or lysine. The sequence is that of Leucyl/phenylalanyl-tRNA--protein transferase from Klebsiella pneumoniae (strain 342).